A 360-amino-acid chain; its full sequence is Phospho-N-acetylmuramoyl-pentapeptide-transferase (360 aa).

Helical transmembrane passes span 27-47 (GAFL…INVL), 69-89 (VGTP…STLM), 93-113 (WDNP…LIGF), 134-154 (LLLG…NHPA), 168-188 (VLLN…VGAA), 199-219 (GLAI…AYAV), 239-259 (ILIF…YNAP), 262-282 (AVFM…AIAI), 288-308 (LVLA…IIQV), and 337-357 (TIVI…LATL).

Belongs to the glycosyltransferase 4 family. MraY subfamily. Mg(2+) is required as a cofactor.

The protein localises to the cell inner membrane. The enzyme catalyses UDP-N-acetyl-alpha-D-muramoyl-L-alanyl-gamma-D-glutamyl-meso-2,6-diaminopimeloyl-D-alanyl-D-alanine + di-trans,octa-cis-undecaprenyl phosphate = di-trans,octa-cis-undecaprenyl diphospho-N-acetyl-alpha-D-muramoyl-L-alanyl-D-glutamyl-meso-2,6-diaminopimeloyl-D-alanyl-D-alanine + UMP. Its pathway is cell wall biogenesis; peptidoglycan biosynthesis. Its function is as follows. Catalyzes the initial step of the lipid cycle reactions in the biosynthesis of the cell wall peptidoglycan: transfers peptidoglycan precursor phospho-MurNAc-pentapeptide from UDP-MurNAc-pentapeptide onto the lipid carrier undecaprenyl phosphate, yielding undecaprenyl-pyrophosphoryl-MurNAc-pentapeptide, known as lipid I. This is Phospho-N-acetylmuramoyl-pentapeptide-transferase from Ruegeria sp. (strain TM1040) (Silicibacter sp.).